We begin with the raw amino-acid sequence, 317 residues long: Putative HTH-type transcriptional regulatory protein TGAM_1316 (317 aa).

The region spanning 131–189 is the HTH cro/C1-type domain; it reads LKKLREKHGYSVGELASLLGVSRKSLLNYERNEQAVSLEVALRMEELFDEPIAEPIDVL. Positions 142–161 form a DNA-binding region, H-T-H motif; that stretch reads VGELASLLGVSRKSLLNYER.

The sequence is that of Putative HTH-type transcriptional regulatory protein TGAM_1316 from Thermococcus gammatolerans (strain DSM 15229 / JCM 11827 / EJ3).